The following is a 1522-amino-acid chain: MADGVTQVDSTGLHSFSPSPSLSSSSSLPAVALSLAVSASAVTASYSISHLPPPPLPPVPTTMAGWIGWVFSFFFQVIPSVLYWIITFSTITLPTWLFTLFSMSLTFTMNFTTLLLIVLAVVSTISWFIRYRFLNMYSRLPPEPQRKEPQVDLFPDVQEGDSKPGLANYLDEFLSAIKVFGYLERPVFHELTRTMQTRKLIAGETLMLEEEKGFCLVVDGLVQIFVKSMRDGKSDTDEELHHLGAESSDEEHHIDGKQGYQLLTEVKNGASMSSLFSILSLFTEDIQLRENESSGSSSSSIALRAARVPNSIPTSPRGVMDSPSLGFQDHSDDTSNMITNGELPSVPPLHLGESRTPPSGDQHHQQHHESRKHSSRKRRKSVHPDIVARAMVDTTIAIIPASAFRRLTRVYPRATAHIVQVILTRLQRVTFATAHSYLGLSNEVLGIEKQMTKFTTYDLPNNMRGAALDRLKDKFIKERDRLGSEEVTKGIALHNPSAGRRRRSSSFLRKDAALQAKLMTPRRAATVVTPESAPAEHDTYGVSPGDLLSTIQSSRFGPRYEQPPAKLQTPLAEKENTHFRLPAMQARHTFRRQDTMDEDGLFRECILDCIMKGIGLTSSTRDALRKSNHSGEASPKLLSYDSRRQKAIFTNNAFGFIDPYEGSGDGETESLMSMSVTSAGGTSPVINLREELRNDIEIVYFPKGSVLVEQGERHPGLYYVIDGFLDVGVPIVDKGEDLVGVSKPAASKGSFPTLKRTTTANSVGAGGTAANDSRRRKQSRKSLYLIKPGGIQGYVGAVASYRSYTDVVAKTDVYVGFLPRASLERIAERYPIALLTLAKRLTSILPRLLLHIDFALEWVQVNAGQVIYRQGDESDAIYLVLNGRLRSVLESPGNKLAVVGEYGQGESVGELEVMTESTRPATLHAIRDTELAKFPRSLFNSLAQEHPGITIQVSKLIAQRMRDLVERPVTEKGVERSNAGSVQTATSTVNLRTVGILPVTAGVPVVEFGNRLLHALHQVGVTNGVTSLNQAAILNHLGRHAFSKMGKLKLSQYLADLEEKYGMVLYIADTNVSSPWTQTCITQADCILLVGLAESSPSIGEYERFLLGMKTTARKELVLLHAERYCPPGLTRRWLKNRVWINGGHHHIQMAFRLTAEPTHPETKRFGTVLKQRVQVLQAEIQKYTSRRIRQTPLYSAQSPFKGDFHRLARRLCGRAVGLVLGGGGARGIAHVGVIKALEEAGIPVDIIGGTSIGSFIGALYARDADVVPMYGRAKKFAGRMGSMWRFALDLTYPTVSYTTGHEFNRGIFKTFGDSQIEDFWLEFYCNTTNISKSRPEYHSSGYVWRYVRASMSLAGLIPPICDEGSMLLDGGYIDNLTVDHMKGLGADVIFAVDVGSIDDNTPQVYGDSLSGFWSVFNRWNPFSSCPNPPTLSEIQARLAYVSSIDNLERAKNIPGCLYMRPPIDGYGTLEFGKFDEIYQVGYAFGKQFLEKLKSEGSLPLPEETEEKKKLQRTLAPRRASI.

The segment at 1–24 (MADGVTQVDSTGLHSFSPSPSLSS) is disordered. Topologically, residues 1–65 (MADGVTQVDS…LPPVPTTMAG (65 aa)) are cytoplasmic. A compositionally biased stretch (low complexity) spans 15-24 (SFSPSPSLSS). Residues 66–86 (WIGWVFSFFFQVIPSVLYWII) traverse the membrane as a helical segment. Residues 87–108 (TFSTITLPTWLFTLFSMSLTFT) are Lumenal-facing. Residues 109 to 129 (MNFTTLLLIVLAVVSTISWFI) traverse the membrane as a helical segment. Topologically, residues 130-1522 (RYRFLNMYSR…RTLAPRRASI (1393 aa)) are cytoplasmic. Disordered regions lie at residues 308–384 (VPNS…SVHP), 523–544 (RAAT…GVSP), and 757–776 (TTTA…SRRR). Over residues 369 to 381 (ESRKHSSRKRRKS) the composition is skewed to basic residues. A nucleoside 3',5'-cyclic phosphate is bound by residues 680-800 (GGTS…AVAS) and 840-960 (RLTS…IAQR). In terms of domain architecture, PNPLA spans 1219–1383 (LVLGGGGARG…IDNLTVDHMK (165 aa)). Positions 1223 to 1228 (GGGARG) match the GXGXXG motif. A GXSXG motif is present at residues 1250-1254 (GTSIG). Ser1252 acts as the Nucleophile in catalysis. Asp1370 (proton acceptor) is an active-site residue. Positions 1370–1372 (DGG) match the DGA/G motif. The interval 1501–1522 (LPEETEEKKKLQRTLAPRRASI) is disordered.

It belongs to the NTE family.

Its subcellular location is the endoplasmic reticulum membrane. It catalyses the reaction a 1-acyl-sn-glycero-3-phosphocholine + H2O = sn-glycerol 3-phosphocholine + a fatty acid + H(+). With respect to regulation, inhibited by organophosphorus esters. Functionally, intracellular phospholipase B that catalyzes the double deacylation of phosphatidylcholine (PC) to glycerophosphocholine (GroPCho). Plays an important role in membrane lipid homeostasis. Responsible for the rapid PC turnover in response to inositol, elevated temperatures, or when choline is present in the growth medium. This Aspergillus fumigatus (strain ATCC MYA-4609 / CBS 101355 / FGSC A1100 / Af293) (Neosartorya fumigata) protein is Lysophospholipase nte1 (nte1).